Reading from the N-terminus, the 223-residue chain is Cytidylate kinase (223 aa).

Residue 12–20 coordinates ATP; the sequence is GPSGVGKGT.

The protein belongs to the cytidylate kinase family. Type 1 subfamily.

Its subcellular location is the cytoplasm. It carries out the reaction CMP + ATP = CDP + ADP. It catalyses the reaction dCMP + ATP = dCDP + ADP. The chain is Cytidylate kinase from Xylella fastidiosa (strain 9a5c).